Reading from the N-terminus, the 61-residue chain is Temporin-SN4 (61 aa).

An N-terminal signal peptide occupies residues 1-22 (MFTLKKTLLLLFFLGTINLSLC). Residues 23 to 44 (EEERNAEEERRDGDDEMDVEVK) constitute a propeptide, removed in mature form. Lys-61 is modified (lysine amide).

This sequence belongs to the frog skin active peptide (FSAP) family. Temporin subfamily. As to expression, expressed by the skin glands.

It is found in the secreted. Its function is as follows. Antimicrobial peptide. Active against some Gram-positive and Gram-negative bacterial strains. Active against fungus C.glabrata 090902 but not against C.albicans ATCC 12231. Shows weak hemolytic activity against human erythrocytes. This Sylvirana spinulosa (Fine-spined frog) protein is Temporin-SN4.